The chain runs to 415 residues: Gamma-glutamyl phosphate reductase (415 aa).

Belongs to the gamma-glutamyl phosphate reductase family.

The protein localises to the cytoplasm. It catalyses the reaction L-glutamate 5-semialdehyde + phosphate + NADP(+) = L-glutamyl 5-phosphate + NADPH + H(+). Its pathway is amino-acid biosynthesis; L-proline biosynthesis; L-glutamate 5-semialdehyde from L-glutamate: step 2/2. Catalyzes the NADPH-dependent reduction of L-glutamate 5-phosphate into L-glutamate 5-semialdehyde and phosphate. The product spontaneously undergoes cyclization to form 1-pyrroline-5-carboxylate. The sequence is that of Gamma-glutamyl phosphate reductase from Thermotoga maritima (strain ATCC 43589 / DSM 3109 / JCM 10099 / NBRC 100826 / MSB8).